The following is a 257-amino-acid chain: 1-(5-phosphoribosyl)-5-[(5-phosphoribosylamino)methylideneamino] imidazole-4-carboxamide isomerase (257 aa).

Catalysis depends on D8, which acts as the Proton acceptor. The active-site Proton donor is the D129.

This sequence belongs to the HisA/HisF family.

It localises to the cytoplasm. It carries out the reaction 1-(5-phospho-beta-D-ribosyl)-5-[(5-phospho-beta-D-ribosylamino)methylideneamino]imidazole-4-carboxamide = 5-[(5-phospho-1-deoxy-D-ribulos-1-ylimino)methylamino]-1-(5-phospho-beta-D-ribosyl)imidazole-4-carboxamide. The protein operates within amino-acid biosynthesis; L-histidine biosynthesis; L-histidine from 5-phospho-alpha-D-ribose 1-diphosphate: step 4/9. The polypeptide is 1-(5-phosphoribosyl)-5-[(5-phosphoribosylamino)methylideneamino] imidazole-4-carboxamide isomerase (Gloeothece citriformis (strain PCC 7424) (Cyanothece sp. (strain PCC 7424))).